Reading from the N-terminus, the 521-residue chain is Chromaffin granule amine transporter (521 aa).

The Cytoplasmic portion of the chain corresponds to 1–21; that stretch reads MLQVVLGAPQRLLKEGRQSRK. Residues 22–42 traverse the membrane as a helical segment; it reads LVLVVVFVALLLDNMLLTVVV. The Lumenal, vesicle portion of the chain corresponds to 43–135; sequence PIVPTFLYAT…IEFLEEENVR (93 aa). 3 N-linked (GlcNAc...) asparagine glycosylation sites follow: Asn58, Asn87, and Asn104. Residues 136–155 form a helical membrane-spanning segment; it reads IGILFASKALMQLLVNPFVG. At 156 to 164 the chain is on the cytoplasmic side; the sequence is PLTNRIGYH. A helical transmembrane segment spans residues 165–185; that stretch reads IPMFVGFMIMFLSTLMFAFSG. Residues 186 to 194 lie on the Lumenal, vesicle side of the membrane; sequence TYALLFVAR. The helical transmembrane segment at 195 to 215 threads the bilayer; that stretch reads TLQGIGSSFSSVAGLGMLASV. Topologically, residues 216-224 are cytoplasmic; it reads YTDNYERGR. Residues 225–247 traverse the membrane as a helical segment; sequence AMGIALGGLALGLLVGAPFGSVM. Over 248 to 253 the chain is Lumenal, vesicle; it reads YEFVGK. A helical transmembrane segment spans residues 254 to 276; the sequence is SSPFLILAFLALLDGALQLCILW. Over 277 to 296 the chain is Cytoplasmic; sequence PSKVSPESAMGTSLLTLLKD. Residues 297–316 form a helical membrane-spanning segment; sequence PYILVAAGSICLANMGVAIL. Residues 317-332 lie on the Lumenal, vesicle side of the membrane; it reads EPTLPIWMMQTMCSPE. A helical transmembrane segment spans residues 333–357; the sequence is WQLGLAFLPASVAYLIGTNLFGVLA. Over 358–362 the chain is Cytoplasmic; it reads NKMGR. Residues 363 to 383 form a helical membrane-spanning segment; it reads WLCSLVGMVAVGISLLCVPLA. Residues 384–394 are Lumenal, vesicle-facing; it reads HNIFGLIGPNA. Residues 395–415 traverse the membrane as a helical segment; the sequence is GLGFAIGMVDSSLMPIMGYLV. Topologically, residues 416–419 are cytoplasmic; sequence DLRH. Residues 420-440 form a helical membrane-spanning segment; sequence TSVYGSVYAIADVAFCVGFAI. At 441-445 the chain is on the lumenal, vesicle side; sequence GPSTG. A helical membrane pass occupies residues 446–467; it reads GVIVQVIGFPWLMVIIGTINII. Topologically, residues 468-521 are cytoplasmic; that stretch reads YAPLCCFLQNPPAKEEKRAILSQECPTETQMYTFQKPTKAFPLGENSDDPSSGE.

This sequence belongs to the major facilitator superfamily. Vesicular transporter family. Adrenal gland.

It is found in the cytoplasmic vesicle. The protein resides in the secretory vesicle membrane. Its subcellular location is the secretory vesicle. It localises to the synaptic vesicle membrane. The enzyme catalyses serotonin(in) + 2 H(+)(out) = serotonin(out) + 2 H(+)(in). It carries out the reaction (R)-noradrenaline(in) + 2 H(+)(out) = (R)-noradrenaline(out) + 2 H(+)(in). It catalyses the reaction dopamine(in) + 2 H(+)(out) = dopamine(out) + 2 H(+)(in). Its activity is regulated as follows. Strongly inhibited by reserpine, ketanserin and methamphetamine. Also inhibited weakly by tetrabenazine. Its function is as follows. Electrogenic antiporter that exchanges one cationic monoamine with two intravesicular protons across the membrane of secretory and synaptic vesicles. Uses the electrochemical proton gradient established by the V-type proton-pump ATPase to accumulate high concentrations of monoamines inside the vesicles prior to their release via exocytosis. Transports catecholamines and indolamines with higher affinity for serotonin. Regulates the transvesicular monoaminergic gradient that determines the quantal size. Mediates presynaptic monoaminergic vesicle transport in the amygdala and prefrontal brain regions related with emotion processing in response to environmental stimuli. The protein is Chromaffin granule amine transporter (Slc18a1) of Rattus norvegicus (Rat).